We begin with the raw amino-acid sequence, 248 residues long: MLAIISSAKTLNFEKLAPKTELTIPMFLTLTNKLLSTLQSYSENQLSKIMNISAKLALINKERFKDFDNQESKAAIFTYAGDVFNNIHIEKLTNHALNFLQSHLLIISGLYGVLKPLDTIKPYRLEMATKLNEINLTNFWQDEVTNYINKILAKQENKYLLNLASQEYSSVINPNKLKYQLVNVHFKENRNGKLSRIGINAKKARGAMVKVIANNLIDSPELLKNFSYLGYAFSTKHSSDNELVFIKS.

It belongs to the UPF0246 family.

The polypeptide is UPF0246 protein RC0754 (Rickettsia conorii (strain ATCC VR-613 / Malish 7)).